A 318-amino-acid polypeptide reads, in one-letter code: Transcription factor FER-LIKE IRON DEFICIENCY-INDUCED TRANSCRIPTION FACTOR (318 aa).

Positions 90–138 (FDGDSVRAGGEEDEEDYNDGDDSSATTTNNDGTRKTKTDRSRTLISERR) are disordered. The segment covering 100 to 111 (EEDEEDYNDGDD) has biased composition (acidic residues). Residues 121 to 136 (GTRKTKTDRSRTLISE) show a composition bias toward basic and acidic residues. Residues 127–176 (TDRSRTLISERRRRGRMKDKLYALRSLVPNITKMDKASIVGDAVLYVQEL) enclose the bHLH domain.

Homodimer. Expressed in roots and inflorescence, and to a lower extent, in leaves and stems. In roots, confined to the outer cell layers, specifically in the differentiation zone. Also detected in the endodermis and inner tissues of the central cylinder.

The protein localises to the nucleus. In terms of biological role, transcription factor. Essential protein involved in iron uptake responses. Regulates FRO2 at the level of mRNA accumulation and IRT1 at the level of protein accumulation. Confers enhanced iron mobilization responses at low iron supply. This chain is Transcription factor FER-LIKE IRON DEFICIENCY-INDUCED TRANSCRIPTION FACTOR (FIT), found in Arabidopsis thaliana (Mouse-ear cress).